Reading from the N-terminus, the 360-residue chain is G-protein coupled receptor 15 (360 aa).

Over 1 to 33 the chain is Extracellular; the sequence is MEPATALLIVDYYDYTSPDPPFLETPSHLSYTS. Residues 34–54 traverse the membrane as a helical segment; it reads VFLPIFYTVVFLTGVVGNFIL. Over 55–69 the chain is Cytoplasmic; the sequence is MIALHFKRGNRRLID. Residues 70-90 traverse the membrane as a helical segment; that stretch reads IFIINLAASDFIFLVTVPLWM. Over 91-120 the chain is Extracellular; it reads DKEASLGLWRTGSFLCKGSSYVISVNMHCS. Residues 121–141 form a helical membrane-spanning segment; the sequence is VFLLTCMSMDRYLAIMHPALA. Over 142 to 149 the chain is Cytoplasmic; the sequence is KRLRRRSS. Residues 150-170 traverse the membrane as a helical segment; the sequence is AYAVCAVVWIISCVLGLPTLL. The Extracellular portion of the chain corresponds to 171–192; that stretch reads SRELTHIEGKPYCAEKKPTSLK. A helical transmembrane segment spans residues 193–213; that stretch reads LMWGLVALITTFFVPLLSIVT. Over 214–239 the chain is Cytoplasmic; the sequence is CYCCITRRLCAHYQQSGKHNKKLKKS. Residues 240–260 form a helical membrane-spanning segment; that stretch reads IKIVIIAVAAFTVSWVPFNTF. At 261-284 the chain is on the extracellular side; the sequence is KLLAIVSGFQPEGLFHSEALQLAM. The chain crosses the membrane as a helical span at residues 285-305; the sequence is NVTGPLAFASSCVNPLIYYVF. The Cytoplasmic portion of the chain corresponds to 306–360; sequence DSYIRRAIVRCLCPCLKTHNFGSSTETSDSHLTKALSNFIHAEDFIRRRKRSVSL. Ser359 is subject to Phosphoserine.

The protein belongs to the G-protein coupled receptor 1 family. In terms of assembly, interacts with adapter YWHAE; this interaction promotes ER-to-Golgi transport of GPR15. Post-translationally, phosphorylation is necessary for YWHAE binding and efficient surface expression. O-glycosylated. Sialylated O-glycans in the N-terminal tail inhibits binding of GPR15LG. In terms of processing, sulfation is required for efficient binding of GPR15LG. As to expression, highly expressed in gut tissues and lymphoid organs, largely restricted to TCRbeta+ cells. Expressed in fetal thymic dendritic epidermal T-cell precursors.

It is found in the cell membrane. G protein-coupled receptor that plays an important role in immune homeostasis. Acts via its natural ligand GPR15LG, a chemokine-like polypeptide strongly expressed in gastrointestinal tissues. GPR15-GPR15LG signaling axis regulates intestinal homeostasis and inflammation through the migration of immune cells. Controls thereby the specific homing of T-cells, particularly FOXP3+ regulatory T-cells (Tregs), to the large intestine lamina propria. Also required for skin localization of thymus-derived dendritic epidermal T-cells. Plays an important role in mediating cytoprotective function as well as angiogenesis of thrombomodulin. Mechanistically, preferentially signals through the Gi/o pathway to inhibit adenylate cyclase activity and activate a phosphatidylinositol-calcium second messenger system that regulates the release of Ca(2+) ions from intracellular stores. The protein is G-protein coupled receptor 15 (Gpr15) of Mus musculus (Mouse).